A 1435-amino-acid polypeptide reads, in one-letter code: Gag-Pol polyprotein (1435 aa).

Residue glycine 2 is the site of N-myristoyl glycine; by host attachment. Residues 7–31 (VLSGGKLDSWEKIRLRPGGRKKYKL) are interaction with Gp41. An interaction with host CALM1 region spans residues 8–43 (LSGGKLDSWEKIRLRPGGRKKYKLKHIVWASRELGR). An interaction with host AP3D1 region spans residues 12–19 (KLDSWEKI). The segment at 14-33 (DSWEKIRLRPGGRKKYKLKH) is interaction with membrane phosphatidylinositol 4,5-bisphosphate and RNA. The Nuclear export signal signature appears at 16–22 (WEKIRLR). A Nuclear localization signal motif is present at residues 26-32 (RKKYKLK). The segment at 72–76 (EELRS) is interaction with membrane phosphatidylinositol 4,5-bisphosphate. Residues 107–126 (QKNSQQEIQQAAKNEGNSNP) form a disordered region. The span at 108–126 (KNSQQEIQQAAKNEGNSNP) shows a compositional bias: polar residues. Tyrosine 131 bears the Phosphotyrosine; by host mark. Residues 188–226 (NTVGGHQAAMQMLKDTINDEAAEWDRIHPQQAGPIPPGQ) are interaction with human PPIA/CYPA and NUP153. The dimerization/Multimerization of capsid protein p24 stretch occupies residues 276-362 (YSPVSILDIR…GGPSHKARVL (87 aa)). 2 CCHC-type zinc fingers span residues 391 to 408 (IKCFNCGKEGHLARNCRA) and 412 to 429 (KGCWKCGKEGHQMKECTE). A disordered region spans residues 444 to 478 (GEARKLSPEQDRANSPTSRELRIRRGDSPLPEAGA). A compositionally biased stretch (basic and acidic residues) spans 445–455 (EARKLSPEQDR). The tract at residues 489 to 493 (PQITL) is dimerization of protease. In terms of domain architecture, Peptidase A2 spans 508 to 577 (IEALLDTGAD…TPINIIGRNM (70 aa)). Residue aspartate 513 is the For protease activity; shared with dimeric partner of the active site. Dimerization of protease regions lie at residues 537 to 543 (GIGGFIK) and 576 to 588 (NMLTQIGCTLNFP). Positions 631–821 (EGKISKIGPE…PPFLWMGYEL (191 aa)) constitute a Reverse transcriptase domain. Residues aspartate 697, aspartate 772, and aspartate 773 each coordinate Mg(2+). The RT 'primer grip' stretch occupies residues 814–822 (FLWMGYELH). The Tryptophan repeat motif signature appears at 985–1001 (WEVWWTEYWQAAWIPEW). Residues 1021–1144 (IPGAETYYVD…VDKLVSSGIR (124 aa)) form the RNase H type-1 domain. 4 residues coordinate Mg(2+): aspartate 1030, glutamate 1065, aspartate 1085, and aspartate 1136. Residues 1150 to 1191 (DGIDKAQEEHERYHSNWRAMASDFNLPPVVAKEIVASCDKCQ) form an Integrase-type zinc finger. Positions 1159, 1163, 1187, and 1190 each coordinate Zn(2+). The region spanning 1201–1351 (VDCSPGIWQL…SAGERIIDII (151 aa)) is the Integrase catalytic domain. Aspartate 1211, aspartate 1263, and glutamate 1299 together coordinate Mg(2+). The integrase-type DNA-binding region spans 1370–1417 (FRVYYRDSRDPIWKGPAKLLWKGEGAVVIQDNNEIKVVPRRKAKILKD).

As to quaternary structure, homotrimer; further assembles as hexamers of trimers. Interacts with gp41 (via C-terminus). Interacts with host CALM1; this interaction induces a conformational change in the Matrix protein, triggering exposure of the myristate group. Interacts with host AP3D1; this interaction allows the polyprotein trafficking to multivesicular bodies during virus assembly. Part of the pre-integration complex (PIC) which is composed of viral genome, matrix protein, Vpr and integrase. In terms of assembly, homodimer; the homodimer further multimerizes as homohexamers or homopentamers. Interacts with human PPIA/CYPA; This interaction stabilizes the capsid. Interacts with human NUP153. Interacts with host PDZD8; this interaction stabilizes the capsid. Interacts with monkey TRIM5; this interaction destabilizes the capsid. Homodimer, whose active site consists of two apposed aspartic acid residues. As to quaternary structure, heterodimer of p66 RT and p51 RT (RT p66/p51). Heterodimerization of RT is essential for DNA polymerase activity. The overall folding of the subdomains is similar in p66 RT and p51 RT but the spatial arrangements of the subdomains are dramatically different. In terms of assembly, homotetramer; may further associate as a homohexadecamer. Part of the pre-integration complex (PIC) which is composed of viral genome, matrix protein, Vpr and integrase. Interacts with human SMARCB1/INI1 and human PSIP1/LEDGF isoform 1. Interacts with human KPNA3; this interaction might play a role in nuclear import of the pre-integration complex. Interacts with human NUP153; this interaction might play a role in nuclear import of the pre-integration complex. Requires Mg(2+) as cofactor. Specific enzymatic cleavages by the viral protease yield mature proteins. The protease is released by autocatalytic cleavage. The polyprotein is cleaved during and after budding, this process is termed maturation. Proteolytic cleavage of p66 RT removes the RNase H domain to yield the p51 RT subunit. Nucleocapsid protein p7 might be further cleaved after virus entry. In terms of processing, tyrosine phosphorylated presumably in the virion by a host kinase. Phosphorylation is apparently not a major regulator of membrane association. Post-translationally, phosphorylated possibly by host MAPK1; this phosphorylation is necessary for Pin1-mediated virion uncoating. Methylated by host PRMT6, impairing its function by reducing RNA annealing and the initiation of reverse transcription.

The protein localises to the host cell membrane. It is found in the host endosome. Its subcellular location is the host multivesicular body. The protein resides in the virion membrane. It localises to the host nucleus. The protein localises to the host cytoplasm. It is found in the virion. The enzyme catalyses Specific for a P1 residue that is hydrophobic, and P1' variable, but often Pro.. It carries out the reaction Endohydrolysis of RNA in RNA/DNA hybrids. Three different cleavage modes: 1. sequence-specific internal cleavage of RNA. Human immunodeficiency virus type 1 and Moloney murine leukemia virus enzymes prefer to cleave the RNA strand one nucleotide away from the RNA-DNA junction. 2. RNA 5'-end directed cleavage 13-19 nucleotides from the RNA end. 3. DNA 3'-end directed cleavage 15-20 nucleotides away from the primer terminus.. The catalysed reaction is 3'-end directed exonucleolytic cleavage of viral RNA-DNA hybrid.. It catalyses the reaction DNA(n) + a 2'-deoxyribonucleoside 5'-triphosphate = DNA(n+1) + diphosphate. Its activity is regulated as follows. Protease: The viral protease is inhibited by many synthetic protease inhibitors (PIs), such as amprenavir, atazanavir, indinavir, loprinavir, nelfinavir, ritonavir and saquinavir. Use of protease inhibitors in tritherapy regimens permit more ambitious therapeutic strategies. Reverse transcriptase/ribonuclease H: RT can be inhibited either by nucleoside RT inhibitors (NRTIs) or by non nucleoside RT inhibitors (NNRTIs). NRTIs act as chain terminators, whereas NNRTIs inhibit DNA polymerization by binding a small hydrophobic pocket near the RT active site and inducing an allosteric change in this region. Classical NRTIs are abacavir, adefovir (PMEA), didanosine (ddI), lamivudine (3TC), stavudine (d4T), tenofovir (PMPA), zalcitabine (ddC), and zidovudine (AZT). Classical NNRTIs are atevirdine (BHAP U-87201E), delavirdine, efavirenz (DMP-266), emivirine (I-EBU), and nevirapine (BI-RG-587). The tritherapies used as a basic effective treatment of AIDS associate two NRTIs and one NNRTI. Mediates, with Gag polyprotein, the essential events in virion assembly, including binding the plasma membrane, making the protein-protein interactions necessary to create spherical particles, recruiting the viral Env proteins, and packaging the genomic RNA via direct interactions with the RNA packaging sequence (Psi). Gag-Pol polyprotein may regulate its own translation, by the binding genomic RNA in the 5'-UTR. At low concentration, the polyprotein would promote translation, whereas at high concentration, the polyprotein would encapsidate genomic RNA and then shut off translation. In terms of biological role, targets the polyprotein to the plasma membrane via a multipartite membrane-binding signal, that includes its myristoylated N-terminus. Matrix protein is part of the pre-integration complex. Implicated in the release from host cell mediated by Vpu. Binds to RNA. Its function is as follows. Forms the conical core that encapsulates the genomic RNA-nucleocapsid complex in the virion. Most core are conical, with only 7% tubular. The core is constituted by capsid protein hexamer subunits. The core is disassembled soon after virion entry. Host restriction factors such as TRIM5-alpha or TRIMCyp bind retroviral capsids and cause premature capsid disassembly, leading to blocks in reverse transcription. Capsid restriction by TRIM5 is one of the factors which restricts HIV-1 to the human species. Host PIN1 apparently facilitates the virion uncoating. On the other hand, interactions with PDZD8 or CYPA stabilize the capsid. Functionally, encapsulates and protects viral dimeric unspliced genomic RNA (gRNA). Binds these RNAs through its zinc fingers. Acts as a nucleic acid chaperone which is involved in rearangement of nucleic acid secondary structure during gRNA retrotranscription. Also facilitates template switch leading to recombination. As part of the polyprotein, participates in gRNA dimerization, packaging, tRNA incorporation and virion assembly. Aspartyl protease that mediates proteolytic cleavages of Gag and Gag-Pol polyproteins during or shortly after the release of the virion from the plasma membrane. Cleavages take place as an ordered, step-wise cascade to yield mature proteins. This process is called maturation. Displays maximal activity during the budding process just prior to particle release from the cell. Also cleaves Nef and Vif, probably concomitantly with viral structural proteins on maturation of virus particles. Hydrolyzes host EIF4GI and PABP1 in order to shut off the capped cellular mRNA translation. The resulting inhibition of cellular protein synthesis serves to ensure maximal viral gene expression and to evade host immune response. Also mediates cleavage of host YTHDF3. Mediates cleavage of host CARD8, thereby activating the CARD8 inflammasome, leading to the clearance of latent HIV-1 in patient CD4(+) T-cells after viral reactivation; in contrast, HIV-1 can evade CARD8-sensing when its protease remains inactive in infected cells prior to viral budding. In terms of biological role, multifunctional enzyme that converts the viral RNA genome into dsDNA in the cytoplasm, shortly after virus entry into the cell. This enzyme displays a DNA polymerase activity that can copy either DNA or RNA templates, and a ribonuclease H (RNase H) activity that cleaves the RNA strand of RNA-DNA heteroduplexes in a partially processive 3' to 5' endonucleasic mode. Conversion of viral genomic RNA into dsDNA requires many steps. A tRNA(3)-Lys binds to the primer-binding site (PBS) situated at the 5'-end of the viral RNA. RT uses the 3' end of the tRNA primer to perform a short round of RNA-dependent minus-strand DNA synthesis. The reading proceeds through the U5 region and ends after the repeated (R) region which is present at both ends of viral RNA. The portion of the RNA-DNA heteroduplex is digested by the RNase H, resulting in a ssDNA product attached to the tRNA primer. This ssDNA/tRNA hybridizes with the identical R region situated at the 3' end of viral RNA. This template exchange, known as minus-strand DNA strong stop transfer, can be either intra- or intermolecular. RT uses the 3' end of this newly synthesized short ssDNA to perform the RNA-dependent minus-strand DNA synthesis of the whole template. RNase H digests the RNA template except for two polypurine tracts (PPTs) situated at the 5'-end and near the center of the genome. It is not clear if both polymerase and RNase H activities are simultaneous. RNase H probably can proceed both in a polymerase-dependent (RNA cut into small fragments by the same RT performing DNA synthesis) and a polymerase-independent mode (cleavage of remaining RNA fragments by free RTs). Secondly, RT performs DNA-directed plus-strand DNA synthesis using the PPTs that have not been removed by RNase H as primers. PPTs and tRNA primers are then removed by RNase H. The 3' and 5' ssDNA PBS regions hybridize to form a circular dsDNA intermediate. Strand displacement synthesis by RT to the PBS and PPT ends produces a blunt ended, linear dsDNA copy of the viral genome that includes long terminal repeats (LTRs) at both ends. Its function is as follows. Catalyzes viral DNA integration into the host chromosome, by performing a series of DNA cutting and joining reactions. This enzyme activity takes place after virion entry into a cell and reverse transcription of the RNA genome in dsDNA. The first step in the integration process is 3' processing. This step requires a complex comprising the viral genome, matrix protein, Vpr and integrase. This complex is called the pre-integration complex (PIC). The integrase protein removes 2 nucleotides from each 3' end of the viral DNA, leaving recessed CA OH's at the 3' ends. In the second step, the PIC enters cell nucleus. This process is mediated through integrase and Vpr proteins, and allows the virus to infect a non dividing cell. This ability to enter the nucleus is specific of lentiviruses, other retroviruses cannot and rely on cell division to access cell chromosomes. In the third step, termed strand transfer, the integrase protein joins the previously processed 3' ends to the 5' ends of strands of target cellular DNA at the site of integration. The 5'-ends are produced by integrase-catalyzed staggered cuts, 5 bp apart. A Y-shaped, gapped, recombination intermediate results, with the 5'-ends of the viral DNA strands and the 3' ends of target DNA strands remaining unjoined, flanking a gap of 5 bp. The last step is viral DNA integration into host chromosome. This involves host DNA repair synthesis in which the 5 bp gaps between the unjoined strands are filled in and then ligated. Since this process occurs at both cuts flanking the HIV genome, a 5 bp duplication of host DNA is produced at the ends of HIV-1 integration. Alternatively, Integrase may catalyze the excision of viral DNA just after strand transfer, this is termed disintegration. This chain is Gag-Pol polyprotein (gag-pol), found in Human immunodeficiency virus type 1 group M subtype G (isolate 92NG083) (HIV-1).